The sequence spans 303 residues: Succinate--CoA ligase [ADP-forming] subunit alpha (303 aa).

CoA contacts are provided by residues 20-23, Lys46, and 108-110; these read TGSE and ITE. Position 173 (Tyr173) interacts with substrate. His259 acts as the Tele-phosphohistidine intermediate in catalysis.

Belongs to the succinate/malate CoA ligase alpha subunit family. In terms of assembly, heterotetramer of two alpha and two beta subunits.

The catalysed reaction is succinate + ATP + CoA = succinyl-CoA + ADP + phosphate. It catalyses the reaction GTP + succinate + CoA = succinyl-CoA + GDP + phosphate. It functions in the pathway carbohydrate metabolism; tricarboxylic acid cycle; succinate from succinyl-CoA (ligase route): step 1/1. In terms of biological role, succinyl-CoA synthetase functions in the citric acid cycle (TCA), coupling the hydrolysis of succinyl-CoA to the synthesis of either ATP or GTP and thus represents the only step of substrate-level phosphorylation in the TCA. The alpha subunit of the enzyme binds the substrates coenzyme A and phosphate, while succinate binding and nucleotide specificity is provided by the beta subunit. In Mycobacterium tuberculosis (strain CDC 1551 / Oshkosh), this protein is Succinate--CoA ligase [ADP-forming] subunit alpha.